The following is a 399-amino-acid chain: Protein HYM1 (399 aa).

The span at 363-382 (VSNNNASSSNVASITSPSSV) shows a compositional bias: low complexity. The tract at residues 363–399 (VSNNNASSSNVASITSPSSVMNNQSSILTHSTSPDSR) is disordered. A compositionally biased stretch (polar residues) spans 383–399 (MNNQSSILTHSTSPDSR).

The protein belongs to the Mo25 family.

The protein is Protein HYM1 (HYM1) of Saccharomyces cerevisiae (strain ATCC 204508 / S288c) (Baker's yeast).